The sequence spans 611 residues: Probable methyltransferase PMT1 (611 aa).

The Cytoplasmic segment spans residues 1–11 (MRGRSEGGKKK). Residues 12–32 (PVIVLLCVASVVLVFVYLFFG) traverse the membrane as a helical; Signal-anchor for type II membrane protein segment. At 33-611 (SSNHKAIEYG…LTSESLRDLE (579 aa)) the chain is on the lumenal side. N-linked (GlcNAc...) asparagine glycosylation is present at asparagine 345.

The protein belongs to the methyltransferase superfamily.

The protein localises to the golgi apparatus membrane. The sequence is that of Probable methyltransferase PMT1 from Arabidopsis thaliana (Mouse-ear cress).